The primary structure comprises 337 residues: Mitochondrial uncoupling protein 6 (337 aa).

3 Solcar repeats span residues 4–136 (KPFL…LKRR), 145–236 (FPLV…VKEI), and 246–331 (GGIG…VRGL). A run of 6 helical transmembrane segments spans residues 6–26 (FLEGGIAAIIAGALTHPLDLI), 105–125 (PAALFSGVSATILRQMLYSAT), 151–171 (ITAGLIAGAVGSVVGNPADVA), 210–230 (RGSWLTVNRAMIVTASQLATY), 252–272 (VAASFAAGIVAAVASNPIDVV), and 304–324 (YKGLVPTATRQGPFTMILFLT).

It belongs to the mitochondrial carrier (TC 2.A.29) family.

The protein localises to the mitochondrion inner membrane. In terms of biological role, PUMPS are mitochondrial transporter proteins that create proton leaks across the inner mitochondrial membrane, thus uncoupling oxidative phosphorylation. This leads to a decrease in the efficiency of oxidative phosphorylation and an increase in heat production. May be involved in protecting plant cells against oxidative stress damage. Recombinant PUMP6, reconstituted into liposomes, transports a wide range of dicarboxylic acids including malate, oxaloacetate and succinate as well as phosphate, sulfate and thiosulfate. However, it is unknown if these transports are of any biological significance in vivo. The protein is Mitochondrial uncoupling protein 6 (PUMP6) of Arabidopsis thaliana (Mouse-ear cress).